We begin with the raw amino-acid sequence, 244 residues long: Glutathione S-transferase theta-2B (244 aa).

Residues 2 to 82 (GLELFLDLVS…YLSCKYQTPD (81 aa)) form the GST N-terminal domain. Glutathione is bound by residues 40-41 (HK), 53-54 (KL), 66-67 (ES), and 104-107 (DCIR). The GST C-terminal domain maps to 88–224 (DLQARARVHE…SILEQAAKKT (137 aa)).

This sequence belongs to the GST superfamily. Theta family. Homodimer. As to expression, expressed at low levels in liver. In lung, expressed at low levels in ciliated bronchiolar cells, alveolar macrophages and alveolar type II cells.

The protein resides in the cytoplasm. The protein localises to the cytosol. The enzyme catalyses RX + glutathione = an S-substituted glutathione + a halide anion + H(+). Functionally, conjugation of reduced glutathione to a wide number of exogenous and endogenous hydrophobic electrophiles. Has a sulfatase activity. The polypeptide is Glutathione S-transferase theta-2B (GSTT2B) (Homo sapiens (Human)).